The primary structure comprises 363 residues: 3,4-dihydroxy-2-butanone 4-phosphate synthase (363 aa).

A DHBP synthase region spans residues 1 to 202; sequence MSHISPIPEI…ITDLIEYRSR (202 aa). D-ribulose 5-phosphate contacts are provided by residues 28–29, aspartate 33, 141–145, and glutamate 165; these read RE and RAGHT. Position 29 (glutamate 29) interacts with Mg(2+). Residue histidine 144 coordinates Mg(2+). The interval 205–363 is GTP cyclohydrolase II-like; that stretch reads SLLEDMGNAP…EVVGFEEAEK (159 aa).

In the N-terminal section; belongs to the DHBP synthase family. This sequence in the C-terminal section; belongs to the GTP cyclohydrolase II family. Requires Mg(2+) as cofactor. Mn(2+) is required as a cofactor.

The enzyme catalyses D-ribulose 5-phosphate = (2S)-2-hydroxy-3-oxobutyl phosphate + formate + H(+). It functions in the pathway cofactor biosynthesis; riboflavin biosynthesis; 2-hydroxy-3-oxobutyl phosphate from D-ribulose 5-phosphate: step 1/1. Its function is as follows. Catalyzes the conversion of D-ribulose 5-phosphate to formate and 3,4-dihydroxy-2-butanone 4-phosphate. This Neisseria meningitidis serogroup A / serotype 4A (strain DSM 15465 / Z2491) protein is 3,4-dihydroxy-2-butanone 4-phosphate synthase (ribB).